The sequence spans 435 residues: MAEAAAASTAASGVIGGWTKHVTCRYFMHGLCKEGDNCRYSHDLTNSKPAAMICKFFQKGNCVFGDRCRFEHCKPAKNEELPAPQMLPLPSASLAGPSDPEPSGPTPVPGAQDWVNAAEFVPGQPYCGRAEQAKVESSVPLIEEFDSYPAPDNKQLRKQLCPYAAVGECRYGINCAYLHGDVCYMCGLQVLHPTDNNQRSEHTKACIEAHEKDMEISFAIQRSKDMMCGVCMEVVFEKANPSERRFGILSNCSHCYCLKCIRKWRSAKQFESKIIKSCPECRITSNFVIPSEYWVEDKDDKQKLIQKYKDGMGSKPCRYFDEGRGTCPFGSNCFYKHAFPDGRLEEAQPQRRQTGSNSRNRNSRRTPLWDIYDERESTDSFDNEDEEMVTFELSEMLLMLLAAGTDDEEVIIRPPSCATSSGRLDPTVTRYRKAC.

2 consecutive C3H1-type zinc fingers follow at residues 18 to 45 and 48 to 75; these read WTKH…HDLT and KPAA…HCKP. The tract at residues 81 to 109 is disordered; that stretch reads LPAPQMLPLPSASLAGPSDPEPSGPTPVP. Residues 99 to 108 show a composition bias toward pro residues; that stretch reads DPEPSGPTPV. Residues 155 to 182 form a C3H1-type 3 zinc finger; that stretch reads QLRKQLCPYAAVGECRYGINCAYLHGDV. The interval 183 to 210 is makorin-type Cys-His; sequence CYMCGLQVLHPTDNNQRSEHTKACIEAH. The segment at 228 to 282 adopts an RING-type zinc-finger fold; it reads CGVCMEVVFEKANPSERRFGILSNCSHCYCLKCIRKWRSAKQFESKIIKSCPECR. The C3H1-type 4 zinc finger occupies 311–340; sequence GMGSKPCRYFDEGRGTCPFGSNCFYKHAFP. The interval 345–369 is disordered; the sequence is EEAQPQRRQTGSNSRNRNSRRTPLW.

In terms of tissue distribution, weakly expressed in adult brain, heart and kidney.

It catalyses the reaction S-ubiquitinyl-[E2 ubiquitin-conjugating enzyme]-L-cysteine + [acceptor protein]-L-lysine = [E2 ubiquitin-conjugating enzyme]-L-cysteine + N(6)-ubiquitinyl-[acceptor protein]-L-lysine.. It participates in protein modification; protein ubiquitination. Functionally, E3 ubiquitin ligase catalyzing the covalent attachment of ubiquitin moieties onto substrate proteins. In Seriola quinqueradiata (Five-ray yellowtail), this protein is Probable E3 ubiquitin-protein ligase makorin-1.